Here is a 136-residue protein sequence, read N- to C-terminus: Large ribosomal subunit protein uL16 (136 aa).

This sequence belongs to the universal ribosomal protein uL16 family. Part of the 50S ribosomal subunit.

Binds 23S rRNA and is also seen to make contacts with the A and possibly P site tRNAs. The protein is Large ribosomal subunit protein uL16 of Vibrio atlanticus (strain LGP32) (Vibrio splendidus (strain Mel32)).